Consider the following 490-residue polypeptide: B3 domain-containing protein LOC_Os12g40080 (490 aa).

Positions 24–117 (GKSFIKVMIT…HFKVWIYDPS (94 aa)) form a DNA-binding region, TF-B3 1. A disordered region spans residues 161–191 (SGHSKETSEINPANSPSWKPTERVPSSEELD). Positions 169–178 (EINPANSPSW) are enriched in polar residues. 2 consecutive DNA-binding regions (TF-B3) follow at residues 236 to 331 (FYIT…FHPL) and 389 to 487 (VAVM…IRKS).

Its subcellular location is the nucleus. This Oryza sativa subsp. japonica (Rice) protein is B3 domain-containing protein LOC_Os12g40080.